Consider the following 484-residue polypeptide: UDP-N-acetylmuramoyl-L-alanyl-D-glutamate--L-lysine ligase (484 aa).

UDP-N-acetyl-alpha-D-muramoyl-L-alanyl-D-glutamate is bound at residue Ser-43. 119 to 125 (GTKGKTT) contributes to the ATP binding site. Residues 161–162 (TT), Ser-188, and Arg-196 each bind UDP-N-acetyl-alpha-D-muramoyl-L-alanyl-D-glutamate. The residue at position 230 (Lys-230) is an N6-carboxylysine. The L-lysine recognition motif motif lies at 405-408 (DDPN).

This sequence belongs to the MurCDEF family. MurE subfamily. Carboxylation is probably crucial for Mg(2+) binding and, consequently, for the gamma-phosphate positioning of ATP.

It localises to the cytoplasm. The catalysed reaction is UDP-N-acetyl-alpha-D-muramoyl-L-alanyl-D-glutamate + L-lysine + ATP = UDP-N-acetyl-alpha-D-muramoyl-L-alanyl-gamma-D-glutamyl-L-lysine + ADP + phosphate + H(+). Its pathway is cell wall biogenesis; peptidoglycan biosynthesis. In terms of biological role, catalyzes the addition of L-lysine to the nucleotide precursor UDP-N-acetylmuramoyl-L-alanyl-D-glutamate (UMAG) in the biosynthesis of bacterial cell-wall peptidoglycan. The sequence is that of UDP-N-acetylmuramoyl-L-alanyl-D-glutamate--L-lysine ligase from Streptococcus agalactiae serotype V (strain ATCC BAA-611 / 2603 V/R).